Reading from the N-terminus, the 260-residue chain is Hydroxyethylthiazole kinase 1 (260 aa).

M39 serves as a coordination point for substrate. Positions 115 and 160 each coordinate ATP. G187 is a substrate binding site.

It belongs to the Thz kinase family. Mg(2+) is required as a cofactor.

The enzyme catalyses 5-(2-hydroxyethyl)-4-methylthiazole + ATP = 4-methyl-5-(2-phosphooxyethyl)-thiazole + ADP + H(+). It participates in cofactor biosynthesis; thiamine diphosphate biosynthesis; 4-methyl-5-(2-phosphoethyl)-thiazole from 5-(2-hydroxyethyl)-4-methylthiazole: step 1/1. Functionally, catalyzes the phosphorylation of the hydroxyl group of 4-methyl-5-beta-hydroxyethylthiazole (THZ). The chain is Hydroxyethylthiazole kinase 1 from Streptococcus pneumoniae serotype 2 (strain D39 / NCTC 7466).